A 90-amino-acid chain; its full sequence is Translation initiation factor IF-1 (90 aa).

One can recognise an S1-like domain in the interval 15-90 (KKQKRKKEEV…TLGRIVFRHK (76 aa)).

This sequence belongs to the IF-1 family. Component of the 30S ribosomal translation pre-initiation complex which assembles on the 30S ribosome in the order IF-2 and IF-3, IF-1 and N-formylmethionyl-tRNA(fMet); mRNA recruitment can occur at any time during PIC assembly.

The protein resides in the cytoplasm. Its function is as follows. One of the essential components for the initiation of protein synthesis. Stabilizes the binding of IF-2 and IF-3 on the 30S subunit to which N-formylmethionyl-tRNA(fMet) subsequently binds. Helps modulate mRNA selection, yielding the 30S pre-initiation complex (PIC). Upon addition of the 50S ribosomal subunit IF-1, IF-2 and IF-3 are released leaving the mature 70S translation initiation complex. The polypeptide is Translation initiation factor IF-1 (Mycoplasma sp).